Here is a 619-residue protein sequence, read N- to C-terminus: MALLQIAEPGQAAAPHQHRLAVGIDLGTTNSLVASVRSGQSVILNDEQERSLVPSVVHYGVEEKKVGLEAFEQASLDPKNTVISVKRLIGRSLSDVQSRYSSLPYEFVASENGLPLIITAQGSKSPIEVSSDILSRLNHIAEQRLGGELSGVVITVPAYFDDAQRQSTKDAARLAGLNVLRLLNEPTAAALAYGLDSGQEGIIAVYDLGGGTFDISILRLSKGIFEVLATGGDTALGGDDFDHLIADWIIEQTKLKPQTANQQRELITLANQAKITLTNEKSAVISWQDFSVEISREQFNELIYPLVKRSLLTCRRALKDANVESEEVQAVVMVGGSTRVPYVREQVGEFFGKTPLTSIDPDKVVALGAAIQADILVGNKTDSDMLLLDVVPLSLGIETMGGLVEKIIPRNTTIPVARAQEFTTFKDGQTAMTVHVLQGERELVDDCRSLGRFTLRGIPPMAAGAAHIRVTYQVDADGLLSVTAMEKSTKVQSSIQIKPSYGLTDEEVTAMIKSSFDNAQEDLQARELAEQRVEADRVIESVIVALQADGAELLSTDEFHHIETVLKQLMDVKLGSDRDAIAQGIKALDTATQEFAARRMNASINKALTGKNLSDIENP.

It belongs to the heat shock protein 70 family.

In terms of biological role, chaperone involved in the maturation of iron-sulfur cluster-containing proteins. Has a low intrinsic ATPase activity which is markedly stimulated by HscB. In Haemophilus influenzae (strain PittGG), this protein is Chaperone protein HscA homolog.